We begin with the raw amino-acid sequence, 158 residues long: UPF0225 protein PSEEN1229 (158 aa).

It belongs to the UPF0225 family.

This chain is UPF0225 protein PSEEN1229, found in Pseudomonas entomophila (strain L48).